A 394-amino-acid chain; its full sequence is Subtilisin-like protease CPC735_005570 (394 aa).

The first 21 residues, 1-21 (MRAIISVALFLSLSLLSAVNA), serve as a signal peptide directing secretion. The propeptide occupies 22–114 (AEILSAGDTD…IEHDRIANAR (93 aa)). One can recognise an Inhibitor I9 domain in the interval 37–110 (SYIVVMRDGL…AVKYIEHDRI (74 aa)). The region spanning 123–394 (GWNLARISHK…RLLLYNGSGR (272 aa)) is the Peptidase S8 domain. Residues aspartate 155 and histidine 186 each act as charge relay system in the active site. N-linked (GlcNAc...) asparagine glycosylation is found at asparagine 216 and asparagine 247. Serine 340 (charge relay system) is an active-site residue. N-linked (GlcNAc...) asparagine glycans are attached at residues asparagine 382 and asparagine 390.

Belongs to the peptidase S8 family.

The protein localises to the secreted. Its function is as follows. Secreted subtilisin-like serine protease with keratinolytic activity that contributes to pathogenicity. The protein is Subtilisin-like protease CPC735_005570 of Coccidioides posadasii (strain C735) (Valley fever fungus).